The following is a 769-amino-acid chain: 5-methyltetrahydropteroyltriglutamate--homocysteine methyltransferase (769 aa).

5-methyltetrahydropteroyltri-L-glutamate is bound by residues 16 to 19 (RELK) and K121. Residues 415 to 450 (SMTERDSPHSSRSPLQREALDLPTLPTTTIGSFPQT) form a disordered region. A compositionally biased stretch (polar residues) spans 439-449 (LPTTTIGSFPQ). L-homocysteine contacts are provided by residues 444-446 (IGS) and E497. L-methionine is bound by residues 444–446 (IGS) and E497. Residues 528–529 (RC) and W574 each bind 5-methyltetrahydropteroyltri-L-glutamate. D612 lines the L-homocysteine pocket. D612 contributes to the L-methionine binding site. Residue E618 participates in 5-methyltetrahydropteroyltri-L-glutamate binding. Zn(2+)-binding residues include H654, C656, and E678. The active-site Proton donor is H707. Zn(2+) is bound at residue C739.

The protein belongs to the vitamin-B12 independent methionine synthase family. The cofactor is Zn(2+).

It catalyses the reaction 5-methyltetrahydropteroyltri-L-glutamate + L-homocysteine = tetrahydropteroyltri-L-glutamate + L-methionine. It participates in amino-acid biosynthesis; L-methionine biosynthesis via de novo pathway; L-methionine from L-homocysteine (MetE route): step 1/1. Its function is as follows. Catalyzes the transfer of a methyl group from 5-methyltetrahydrofolate to homocysteine resulting in methionine formation. This Salinibacter ruber (strain DSM 13855 / M31) protein is 5-methyltetrahydropteroyltriglutamate--homocysteine methyltransferase.